The sequence spans 32 residues: Photosystem II reaction center protein T (32 aa).

The chain crosses the membrane as a helical span at residues 3 to 23 (ALVYTFLLIGTLMVIFFAVFF).

The protein belongs to the PsbT family. In terms of assembly, PSII is composed of 1 copy each of membrane proteins PsbA, PsbB, PsbC, PsbD, PsbE, PsbF, PsbH, PsbI, PsbJ, PsbK, PsbL, PsbM, PsbT, PsbX, PsbY, PsbZ, Psb30/Ycf12, at least 3 peripheral proteins of the oxygen-evolving complex and a large number of cofactors. It forms dimeric complexes.

Its subcellular location is the plastid. It is found in the chloroplast thylakoid membrane. Functionally, found at the monomer-monomer interface of the photosystem II (PS II) dimer, plays a role in assembly and dimerization of PSII. PSII is a light-driven water plastoquinone oxidoreductase, using light energy to abstract electrons from H(2)O, generating a proton gradient subsequently used for ATP formation. The protein is Photosystem II reaction center protein T of Trieres chinensis (Marine centric diatom).